Consider the following 473-residue polypeptide: MNINMKDNFKKWLDLQQKKTLLKFLTCGSVDDGKSTLIGRLLHDTKQIYDDQLFFLKSDSKRHGTQGNEIDLALVVDGLQSEREQGITIDVAYRYFSTNKRKFIIADTPGHEQYTRNMATGASTCDLSILLVDARKGLSEQTYRHSFISTLLGIKYLIVAINKMDLVNYKQEIFENIKKDFLIFSKKLANDLNIIFIPMSALLGENIVFKTKLMPWYQGVTLLSFLETIKIKNSISSEELRFPVQYINRPNADFRGYSGILLSGRMHVGQTIKILPENINSRVSRIVTFDKELKKAEIGESITVVLKDEIDINRGDFFVNIDSILQPSQEAIIDIVWMTDNILLAGESYNVKLSGKKIRVYIKEILFKLDVNTLKKVKSHSLVLNSIGRVKIYFSKPVIFDNYSENRMTGNMIFIDLLTNITVGAGMIVNSLDKKGKIPSNKQKDFESDFYDLITRHFPHWNIPKILMKKVYK.

A tr-type G domain is found at 19–238 (KTLLKFLTCG…IKIKNSISSE (220 aa)). The interval 28–35 (GSVDDGKS) is G1. 28–35 (GSVDDGKS) contributes to the GTP binding site. The interval 86 to 90 (GITID) is G2. A G3 region spans residues 107 to 110 (DTPG). GTP contacts are provided by residues 107 to 111 (DTPGH) and 162 to 165 (NKMD). The segment at 162–165 (NKMD) is G4. The interval 200–202 (SAL) is G5.

This sequence belongs to the TRAFAC class translation factor GTPase superfamily. Classic translation factor GTPase family. CysN/NodQ subfamily. As to quaternary structure, heterodimer composed of CysD, the smaller subunit, and CysN.

It carries out the reaction sulfate + ATP + H(+) = adenosine 5'-phosphosulfate + diphosphate. The protein operates within sulfur metabolism; hydrogen sulfide biosynthesis; sulfite from sulfate: step 1/3. Functionally, with CysD forms the ATP sulfurylase (ATPS) that catalyzes the adenylation of sulfate producing adenosine 5'-phosphosulfate (APS) and diphosphate, the first enzymatic step in sulfur assimilation pathway. APS synthesis involves the formation of a high-energy phosphoric-sulfuric acid anhydride bond driven by GTP hydrolysis by CysN coupled to ATP hydrolysis by CysD. The protein is Sulfate adenylyltransferase subunit 1 of Buchnera aphidicola subsp. Acyrthosiphon pisum (strain 5A).